We begin with the raw amino-acid sequence, 384 residues long: S-adenosylmethionine synthase (384 aa).

Position 15 (histidine 15) interacts with ATP. Aspartate 17 is a binding site for Mg(2+). Glutamate 43 provides a ligand contact to K(+). Residues glutamate 56 and glutamine 99 each coordinate L-methionine. A flexible loop region spans residues 99–109 (QSPDINQGVDK). ATP-binding positions include 164-166 (DAK), 230-231 (RF), aspartate 239, 245-246 (RK), alanine 262, and lysine 266. L-methionine is bound at residue aspartate 239. Lysine 270 lines the L-methionine pocket.

Belongs to the AdoMet synthase family. As to quaternary structure, homotetramer; dimer of dimers. Requires Mg(2+) as cofactor. K(+) serves as cofactor.

Its subcellular location is the cytoplasm. It catalyses the reaction L-methionine + ATP + H2O = S-adenosyl-L-methionine + phosphate + diphosphate. It participates in amino-acid biosynthesis; S-adenosyl-L-methionine biosynthesis; S-adenosyl-L-methionine from L-methionine: step 1/1. Catalyzes the formation of S-adenosylmethionine (AdoMet) from methionine and ATP. The overall synthetic reaction is composed of two sequential steps, AdoMet formation and the subsequent tripolyphosphate hydrolysis which occurs prior to release of AdoMet from the enzyme. In Vibrio parahaemolyticus serotype O3:K6 (strain RIMD 2210633), this protein is S-adenosylmethionine synthase.